The following is a 91-amino-acid chain: Small membrane A-kinase anchor protein (91 aa).

Glycine 2 carries the N-myristoyl glycine lipid modification.

Belongs to the small membrane AKAP family. May be palmitoylated at Cys-3.

The protein resides in the cell membrane. Functionally, binds to type I regulatory subunits of protein kinase A and may anchor/target them to the plasma membrane. The polypeptide is Small membrane A-kinase anchor protein (Xenopus laevis (African clawed frog)).